A 169-amino-acid chain; its full sequence is MYTSGYANRSSSFPTTTHNAARTATENAAAGLVSEVVYHEDQPMMAQLLLLPLLRQLGQQSRWQLWLTPQQKLSREWVQSSGLPLTKVMQISQLAPRHTLESMIRALRTGNYSVVIGWMTEELTEEEHASLVEAAKVGNAVGFIMHPVRAHALPRRQHSGLKIHSNLYH.

The ftsZ binding stretch occupies residues 106 to 112 (ALRTGNY). Positions 162–169 (KIHSNLYH) are lon protease binding.

It belongs to the SulA family. Interacts with FtsZ. Post-translationally, is rapidly cleaved and degraded by the Lon protease once DNA damage is repaired.

Functionally, component of the SOS system and an inhibitor of cell division. Accumulation of SulA causes rapid cessation of cell division and the appearance of long, non-septate filaments. In the presence of GTP, binds a polymerization-competent form of FtsZ in a 1:1 ratio, thus inhibiting FtsZ polymerization and therefore preventing it from participating in the assembly of the Z ring. This mechanism prevents the premature segregation of damaged DNA to daughter cells during cell division. The protein is Cell division inhibitor SulA of Salmonella choleraesuis (strain SC-B67).